Reading from the N-terminus, the 545-residue chain is Membrane protein insertase YidC (545 aa).

Transmembrane regions (helical) follow at residues 10-30 (AIYLSLFFIGIFMIIDDIFFS), 319-339 (LLYFIQVPMQLIMQIFYNVIP), 341-361 (WGLSIMFLTIVVRILIFPLTF), 407-427 (LGGCFPILLQLPVFFALYGLV), 467-487 (ILPFIMMVTQLISTIISSNVS), and 502-522 (MPIMFFFILYDMPSGLLIYWI).

This sequence belongs to the OXA1/ALB3/YidC family. Type 1 subfamily. As to quaternary structure, interacts with the Sec translocase complex via SecD. Specifically interacts with transmembrane segments of nascent integral membrane proteins during membrane integration.

It localises to the cell inner membrane. In terms of biological role, required for the insertion and/or proper folding and/or complex formation of integral membrane proteins into the membrane. Involved in integration of membrane proteins that insert both dependently and independently of the Sec translocase complex, as well as at least some lipoproteins. Aids folding of multispanning membrane proteins. The protein is Membrane protein insertase YidC of Borrelia hermsii (strain HS1 / DAH).